A 338-amino-acid chain; its full sequence is Probable protein S-acyltransferase 1 (338 aa).

The next 2 membrane-spanning stretches (helical) occupy residues 32 to 52 (DASS…AFSI) and 68 to 88 (LTLI…FLTS). The DHHC domain occupies 142 to 192 (KFCDTCQLYRPPRAFHCSICNNCVQRFDHHCPWVGQCIALRNYPFFVCFLS). The S-palmitoyl cysteine intermediate role is filled by C172. The next 2 membrane-spanning stretches (helical) occupy residues 186-206 (FFVC…VFSW) and 225-245 (ILGV…GLTV). The segment at 319–338 (FGPKDTKMSSGKSDSEARER) is disordered. Over residues 320 to 338 (GPKDTKMSSGKSDSEARER) the composition is skewed to basic and acidic residues.

It belongs to the DHHC palmitoyltransferase family.

Its subcellular location is the endosome membrane. The catalysed reaction is L-cysteinyl-[protein] + hexadecanoyl-CoA = S-hexadecanoyl-L-cysteinyl-[protein] + CoA. Functionally, palmitoyl acyltransferase. In Arabidopsis thaliana (Mouse-ear cress), this protein is Probable protein S-acyltransferase 1 (PAT01).